A 1009-amino-acid chain; its full sequence is Type VII secretion system accessory factor EsaA (1009 aa).

The chain crosses the membrane as a helical span at residues 7–27; the sequence is IYALIVTLIIIIAIVSMIFFV. A compositionally biased stretch (basic and acidic residues) spans 680–697; the sequence is TFAEEPQEPKIDKGKNDE. The tract at residues 680–707 is disordered; sequence TFAEEPQEPKIDKGKNDEFNTMSSNLDK. Transmembrane regions (helical) follow at residues 822-842, 869-889, 903-923, 928-948, and 979-999; these read ISPT…AYIF, VITS…VGLI, KFIL…TYLL, SIGM…MNNL, and IGLV…LNMF.

This sequence belongs to the EsaA family. In terms of assembly, homodimer. Interacts with EssB.

Its subcellular location is the cell membrane. Functionally, component of the type VII secretion system (Ess). Provides together with EssB and other components such as EssC and EssE a secretion plateform accross the cytoplasmic membrane in the host. The protein is Type VII secretion system accessory factor EsaA of Staphylococcus aureus (strain USA300).